The primary structure comprises 838 residues: V-type proton ATPase 116 kDa subunit a 1 (838 aa).

Over 1 to 388 (MGELFRSEEM…DAYGIGTYRE (388 aa)) the chain is Cytoplasmic. Residues 389–407 (INPAPYTIITFPFLFAVMF) traverse the membrane as a helical segment. Topologically, residues 408–409 (GD) are vacuolar. Residues 410–426 (FGHGILMTLIAIWMVLR) traverse the membrane as a helical segment. Residues 427–441 (ESRILSQKSDNEMFS) are Cytoplasmic-facing. The helical transmembrane segment at 442 to 471 (TVFSGRYIILLMGLFSTYTGLIYNDCFSKS) threads the bilayer. Residues 472 to 535 (LNMFGSSWSV…ANNKLAFLNS (64 aa)) are Vacuolar-facing. The helical transmembrane segment at 536–555 (FKMKMSVILGIIHMLFGVML) threads the bilayer. The Cytoplasmic segment spans residues 556 to 573 (SLLNHIYFKKPLNIYLGF). Residues 574 to 594 (IPEMIFMSSLFGYLVILIFYK) form a helical membrane-spanning segment. Residues 595 to 639 (WTAYDAHTSKEAPSPLIHFINMFLFSYGDTSNKMLYRGQKGIQCF) lie on the Vacuolar side of the membrane. A helical membrane pass occupies residues 640–659 (LVVVALLCVPWMLVAKPLVL). At 660–725 (RHQYLRRKHL…DTVVYQAIHT (66 aa)) the chain is on the cytoplasmic side. The chain crosses the membrane as a helical span at residues 726 to 750 (IEYCLGCISNTASYLRLWALSLAHA). Residues 751-771 (QLSEVLWTMVIHTGLSVRSLA) are Vacuolar-facing. Residues 772-810 (GGFGLVFIFAAFATLTVAILLVMEGLSAFLHALRLHWIE) traverse the membrane as a helical segment. The Cytoplasmic segment spans residues 811–838 (FQNKFYTGTGFKFLPFSFDPIREGKFDD).

It belongs to the V-ATPase 116 kDa subunit family. As to quaternary structure, V-ATPase is a heteromultimeric enzyme made up of two complexes: the ATP-hydrolytic V1 complex and the proton translocation V0 complex. The V1 complex consists of three catalytic AB heterodimers that form a heterohexamer, three peripheral stalks each consisting of EG heterodimers, one central rotor including subunits D and F, and the regulatory subunits C and H. The proton translocation complex V0 consists of the proton transport subunit a, a ring of proteolipid subunits c9c'', rotary subunit d, subunits e and f, and two accessory subunits. Detected in brain (at protein level). Highest expression in brain, intermediate levels in kidney, and relatively low levels in bone and liver.

It localises to the cytoplasmic vesicle. The protein resides in the clathrin-coated vesicle membrane. It is found in the secretory vesicle. Its subcellular location is the synaptic vesicle membrane. The protein localises to the melanosome. Subunit of the V0 complex of vacuolar(H+)-ATPase (V-ATPase), a multisubunit enzyme composed of a peripheral complex (V1) that hydrolyzes ATP and a membrane integral complex (V0) that translocates protons. V-ATPase is responsible for acidifying and maintaining the pH of intracellular compartments and in some cell types, is targeted to the plasma membrane, where it is responsible for acidifying the extracellular environment. Required for assembly and activity of the vacuolar ATPase. In Gallus gallus (Chicken), this protein is V-type proton ATPase 116 kDa subunit a 1 (ATP6V0A1).